We begin with the raw amino-acid sequence, 296 residues long: Putative thiosulfate sulfurtransferase SseA (296 aa).

Rhodanese domains lie at 31–138 (GKPG…DTSL) and 168–286 (ILGT…VPIT). Cys245 acts as the Cysteine persulfide intermediate in catalysis. Arg250 contributes to the substrate binding site.

The catalysed reaction is thiosulfate + hydrogen cyanide = thiocyanate + sulfite + 2 H(+). The protein is Putative thiosulfate sulfurtransferase SseA (sseA) of Mycobacterium leprae (strain TN).